The primary structure comprises 537 residues: Cryptic loci regulator 2 (537 aa).

The disordered stretch occupies residues 96–116 (VSARHVRPNPKSSKDTLEKQP). The segment covering 107–116 (SSKDTLEKQP) has biased composition (basic and acidic residues).

Interacts with clr3.

The protein localises to the nucleus. Its subcellular location is the chromosome. It is found in the centromere. It localises to the telomere. Required for deacetylation in the mating-type region and the centromere. Acts upstream of the histone deacetylases to promote transcriptional silencing. Required for proper positioning of nucleosomes at heterochromatic loci and for transcriptional gene silencing (TGS) function of the Snf2/Hdac-containing repressor complex (SHREC). The protein is Cryptic loci regulator 2 (clr2) of Schizosaccharomyces pombe (strain 972 / ATCC 24843) (Fission yeast).